The primary structure comprises 112 residues: Large ribosomal subunit protein mL53 (112 aa).

It belongs to the mitochondrion-specific ribosomal protein mL53 family. In terms of assembly, component of the mitochondrial ribosome large subunit (39S) which comprises a 16S rRNA and about 50 distinct proteins.

It is found in the mitochondrion. The polypeptide is Large ribosomal subunit protein mL53 (MRPL53) (Bos taurus (Bovine)).